Consider the following 293-residue polypeptide: Phosphatidylserine decarboxylase proenzyme (293 aa).

Active-site charge relay system; for autoendoproteolytic cleavage activity residues include Asp-90, His-147, and Ser-254. Ser-254 (schiff-base intermediate with substrate; via pyruvic acid; for decarboxylase activity) is an active-site residue. A Pyruvic acid (Ser); by autocatalysis modification is found at Ser-254.

It belongs to the phosphatidylserine decarboxylase family. PSD-B subfamily. Prokaryotic type I sub-subfamily. In terms of assembly, heterodimer of a large membrane-associated beta subunit and a small pyruvoyl-containing alpha subunit. The cofactor is pyruvate. In terms of processing, is synthesized initially as an inactive proenzyme. Formation of the active enzyme involves a self-maturation process in which the active site pyruvoyl group is generated from an internal serine residue via an autocatalytic post-translational modification. Two non-identical subunits are generated from the proenzyme in this reaction, and the pyruvate is formed at the N-terminus of the alpha chain, which is derived from the carboxyl end of the proenzyme. The autoendoproteolytic cleavage occurs by a canonical serine protease mechanism, in which the side chain hydroxyl group of the serine supplies its oxygen atom to form the C-terminus of the beta chain, while the remainder of the serine residue undergoes an oxidative deamination to produce ammonia and the pyruvoyl prosthetic group on the alpha chain. During this reaction, the Ser that is part of the protease active site of the proenzyme becomes the pyruvoyl prosthetic group, which constitutes an essential element of the active site of the mature decarboxylase.

It localises to the cell membrane. It catalyses the reaction a 1,2-diacyl-sn-glycero-3-phospho-L-serine + H(+) = a 1,2-diacyl-sn-glycero-3-phosphoethanolamine + CO2. The protein operates within phospholipid metabolism; phosphatidylethanolamine biosynthesis; phosphatidylethanolamine from CDP-diacylglycerol: step 2/2. In terms of biological role, catalyzes the formation of phosphatidylethanolamine (PtdEtn) from phosphatidylserine (PtdSer). In Yersinia enterocolitica serotype O:8 / biotype 1B (strain NCTC 13174 / 8081), this protein is Phosphatidylserine decarboxylase proenzyme.